Consider the following 920-residue polypeptide: Periplasmic nitrate reductase (920 aa).

Positions 1–29 form a signal peptide, tat-type signal; that stretch reads MNRRDFIKSTAAAAACASAGIALPANLNA. A 4Fe-4S Mo/W bis-MGD-type domain is found at 35 to 91; it reads WRWDKAVCRFCGTGCGIMVATKNGKIVAVKGDPEAPVNRGLNCIKGYFNAKIMYGDD. 4 residues coordinate [4Fe-4S] cluster: C42, C45, C49, and C77. Mo-bis(molybdopterin guanine dinucleotide) is bound by residues K79, Q147, N172, C176, 209–216, M416, Q420, N526, 551–552, K574, D601, and 810–819; these read WGANMAEM, SD, and TGRVLEHWHS. W886 is a substrate binding site. Residues N894 and K911 each coordinate Mo-bis(molybdopterin guanine dinucleotide).

It belongs to the prokaryotic molybdopterin-containing oxidoreductase family. NasA/NapA/NarB subfamily. In terms of assembly, component of the periplasmic nitrate reductase NapAB complex composed of NapA and NapB. [4Fe-4S] cluster is required as a cofactor. It depends on Mo-bis(molybdopterin guanine dinucleotide) as a cofactor. Predicted to be exported by the Tat system. The position of the signal peptide cleavage has not been experimentally proven.

It is found in the periplasm. The enzyme catalyses 2 Fe(II)-[cytochrome] + nitrate + 2 H(+) = 2 Fe(III)-[cytochrome] + nitrite + H2O. In terms of biological role, catalytic subunit of the periplasmic nitrate reductase complex NapAB. Receives electrons from NapB and catalyzes the reduction of nitrate to nitrite. This Campylobacter hominis (strain ATCC BAA-381 / DSM 21671 / CCUG 45161 / LMG 19568 / NCTC 13146 / CH001A) protein is Periplasmic nitrate reductase.